The sequence spans 377 residues: Chaperone protein DnaJ (377 aa).

The J domain occupies 4-69; that stretch reads DYYEALGVTR…QKRAAYDRFG (66 aa). The CR-type zinc-finger motif lies at 135–213; that stretch reads GKTAQIRVPT…CHGQGRVTQE (79 aa). Zn(2+)-binding residues include Cys148, Cys151, Cys165, Cys168, Cys187, Cys190, Cys201, and Cys204. CXXCXGXG motif repeat units lie at residues 148–155, 165–172, 187–194, and 201–208; these read CDECSGSG, CTMCSGSG, CPGCNGRG, and CEKCHGQG.

This sequence belongs to the DnaJ family. As to quaternary structure, homodimer. Requires Zn(2+) as cofactor.

The protein localises to the cytoplasm. Participates actively in the response to hyperosmotic and heat shock by preventing the aggregation of stress-denatured proteins and by disaggregating proteins, also in an autonomous, DnaK-independent fashion. Unfolded proteins bind initially to DnaJ; upon interaction with the DnaJ-bound protein, DnaK hydrolyzes its bound ATP, resulting in the formation of a stable complex. GrpE releases ADP from DnaK; ATP binding to DnaK triggers the release of the substrate protein, thus completing the reaction cycle. Several rounds of ATP-dependent interactions between DnaJ, DnaK and GrpE are required for fully efficient folding. Also involved, together with DnaK and GrpE, in the DNA replication of plasmids through activation of initiation proteins. The chain is Chaperone protein DnaJ from Brucella canis (strain ATCC 23365 / NCTC 10854 / RM-666).